Here is a 225-residue protein sequence, read N- to C-terminus: NAD(P)H-quinone oxidoreductase subunit K, chloroplastic (225 aa).

[4Fe-4S] cluster contacts are provided by Cys43, Cys44, Cys108, and Cys139.

This sequence belongs to the complex I 20 kDa subunit family. NDH is composed of at least 16 different subunits, 5 of which are encoded in the nucleus. [4Fe-4S] cluster is required as a cofactor.

The protein resides in the plastid. Its subcellular location is the chloroplast thylakoid membrane. The catalysed reaction is a plastoquinone + NADH + (n+1) H(+)(in) = a plastoquinol + NAD(+) + n H(+)(out). It carries out the reaction a plastoquinone + NADPH + (n+1) H(+)(in) = a plastoquinol + NADP(+) + n H(+)(out). Functionally, NDH shuttles electrons from NAD(P)H:plastoquinone, via FMN and iron-sulfur (Fe-S) centers, to quinones in the photosynthetic chain and possibly in a chloroplast respiratory chain. The immediate electron acceptor for the enzyme in this species is believed to be plastoquinone. Couples the redox reaction to proton translocation, and thus conserves the redox energy in a proton gradient. This is NAD(P)H-quinone oxidoreductase subunit K, chloroplastic from Barbarea verna (Land cress).